Reading from the N-terminus, the 25-residue chain is Histone H1.1 (25 aa).

An H15 domain is found at 1-25; that stretch reads MVSEAIAALKEREGSSEFAIGKKKE. The disordered stretch occupies residues 1–25; sequence MVSEAIAALKEREGSSEFAIGKKKE. Basic and acidic residues predominate over residues 9-25; that stretch reads LKEREGSSEFAIGKKKE.

It localises to the nucleus. The protein localises to the chromosome. In terms of biological role, histones H1 are necessary for the condensation of nucleosome chains into higher-order structures. The protein is Histone H1.1 of Triticum aestivum (Wheat).